The primary structure comprises 82 residues: MKGMIMLISCLMLIEVVVGGKEGYLLDRSNGCKRSCFFGSTSWCNTECKSKSADKGYCAWPSCYCYGFTDDSKMWHLKTNKC.

A signal peptide spans 1 to 20; sequence MKGMIMLISCLMLIEVVVGG. The LCN-type CS-alpha/beta domain maps to 21-82; it reads KEGYLLDRSN…KMWHLKTNKC (62 aa). 4 disulfides stabilise this stretch: cysteine 32–cysteine 82, cysteine 36–cysteine 58, cysteine 44–cysteine 63, and cysteine 48–cysteine 65.

Belongs to the long (4 C-C) scorpion toxin superfamily. Sodium channel inhibitor family. Beta subfamily. Expressed by the venom gland.

The protein localises to the secreted. Functionally, beta toxins bind voltage-independently at site-4 of sodium channels (Nav) and shift the voltage of activation toward more negative potentials thereby affecting sodium channel activation and promoting spontaneous and repetitive firing. Is toxic to arthropods. This Tityus discrepans (Venezuelan scorpion) protein is Toxin TdNa6.